The chain runs to 413 residues: Serine/threonine transporter SstT (413 aa).

A run of 8 helical transmembrane segments spans residues 19-39 (IFIG…LQNV), 61-81 (AVAP…KKIG), 89-109 (IIVL…IAGF), 148-168 (ALFK…GLAL), 189-209 (IVYV…SETL), 223-243 (LLAV…PILV), 297-317 (IPLG…ILTL), and 325-345 (IQIS…CACG).

Belongs to the dicarboxylate/amino acid:cation symporter (DAACS) (TC 2.A.23) family.

Its subcellular location is the cell inner membrane. The catalysed reaction is L-serine(in) + Na(+)(in) = L-serine(out) + Na(+)(out). The enzyme catalyses L-threonine(in) + Na(+)(in) = L-threonine(out) + Na(+)(out). Its function is as follows. Involved in the import of serine and threonine into the cell, with the concomitant import of sodium (symport system). This Pasteurella multocida (strain Pm70) protein is Serine/threonine transporter SstT.